A 75-amino-acid polypeptide reads, in one-letter code: uncharacterized protein (75 aa).

This is an uncharacterized protein from Saccharomyces cerevisiae (strain ATCC 204508 / S288c) (Baker's yeast).